The sequence spans 324 residues: MFNFANFYQLLAQDTVLQPWLNTLPQQLTDWQNAEHGDIERWIKALKKIPEGCADNIDLKSSVTLSNNTPLIDGERKKLENLLQTFHPWRKGPFTVHDIHIDTEWRSDWKWDRLLPHITPLKNRSVLDVGCGNGYHMWRMLGEEARLCVGIDPSHLFLIQFEAIRKLMGNDQRAHLLPLGIEQLPELNAFDTVFSMGVLYHRRSPLDHLIQLKNQLVAGGELVLETLVIDGDENAVLMPVDRYAQMRNVYFFPSARALKVWLESVGFVDVKIVDECVTTTGEQRSTEWMKHNSLPEYLDPNDSTKTIEGHPAPKRAILIAKKPD.

Carboxy-S-adenosyl-L-methionine-binding positions include Lys91, Trp105, Lys110, Gly130, 152–154 (DPS), 181–182 (IE), Met196, Tyr200, and Arg315.

Belongs to the class I-like SAM-binding methyltransferase superfamily. CmoB family. As to quaternary structure, homotetramer.

The enzyme catalyses carboxy-S-adenosyl-L-methionine + 5-hydroxyuridine(34) in tRNA = 5-carboxymethoxyuridine(34) in tRNA + S-adenosyl-L-homocysteine + H(+). Its function is as follows. Catalyzes carboxymethyl transfer from carboxy-S-adenosyl-L-methionine (Cx-SAM) to 5-hydroxyuridine (ho5U) to form 5-carboxymethoxyuridine (cmo5U) at position 34 in tRNAs. In Aliivibrio fischeri (strain MJ11) (Vibrio fischeri), this protein is tRNA U34 carboxymethyltransferase.